Reading from the N-terminus, the 222-residue chain is PLASMODESMATA CALLOSE-BINDING PROTEIN 4 (222 aa).

The signal sequence occupies residues 1-19 (MSVLLPLCLIISMFTYSNA). An intrachain disulfide couples Cys22 to Cys83. Low complexity predominate over residues 88–187 (AASPSTTPPS…SVFPGTTLGP (100 aa)). A disordered region spans residues 88–199 (AASPSTTPPS…SGGLGDPNAG (112 aa)). The GPI-anchor amidated asparagine moiety is linked to residue Asn197. The propeptide at 198–222 (AGEKLSVRTNTVVFLLTGVAAMLVI) is removed in mature form.

In terms of processing, contains two additional disulfide bonds.

The protein resides in the cell membrane. It is found in the cell junction. Its subcellular location is the plasmodesma. The sequence is that of PLASMODESMATA CALLOSE-BINDING PROTEIN 4 (PDCB4) from Arabidopsis thaliana (Mouse-ear cress).